The sequence spans 252 residues: Chaplin-A (252 aa).

Positions 1-20 are cleaved as a signal peptide; it reads MVAAAAATGILSLCGSPALA. The Chaplin 1 domain maps to 31-71; the sequence is SPGAVSGNALQVPVDVPVNACGNTVDVIAALNPAFGNECEN. 2 disordered regions span residues 71 to 121 and 150 to 224; these read NASD…GNNA and CEND…GSEG. The segment covering 86–108 has biased composition (low complexity); that stretch reads EDASSSSSSSTSASSSGSHADGA. One can recognise a Chaplin 2 domain in the interval 112–152; the sequence is SPGVGSGNNAQVPVDVPVNLCGNTVDVIAALNPVFGNKCEN. Positions 153-165 are enriched in acidic residues; sequence DAEEPPGYGEEEP. Residues 210 to 224 are compositionally biased toward low complexity; the sequence is QTEQPPALAETGSEG. Positions 217 to 221 match the LPXTG sorting signal motif; it reads LAETG. 2 consecutive propeptides (removed by sortase) follow at residues 219–252 and 221–252; these read ETGS…LSGR and GSEG…LSGR. Threonine 220 is subject to Pentaglycyl murein peptidoglycan amidated threonine.

Belongs to the chaplin family. Long chaplin subfamily.

Its subcellular location is the secreted. The protein localises to the cell wall. One of 8 partially redundant surface-active proteins required for efficient formation of aerial mycelium; the short chaplins assemble into a hydrophobic, amyloidal fibrillar surface layer that envelopes and protects aerial hyphae and spores, presumably anchored to the long chaplins. Chaplins have an overlapping function with the surface-active SapB peptide; chaplins are essential on minimal medium while on rich medium both chaplins and SapB are required for efficient aerial hyphae formation. A minimal chaplin strain capable of forming aerial mycelium/hyphae on minimal medium contains ChpC, ChpE and ChpH. The strain also has restored rodlet formation on the hyphae surface. A second minimal chaplin strain with ChpA, ChpD and ChpE makes slightly less robust hyphae. The long chaplins (ChpA, ChpB, ChpC) are not absolutely necessary for short chaplin localization or rodlet formation, but probably play a role in initiating aerial hyphae development. Chaplins are also involved in cell attachment to a hydrophobic surface. The polypeptide is Chaplin-A (Streptomyces coelicolor (strain ATCC BAA-471 / A3(2) / M145)).